Reading from the N-terminus, the 418-residue chain is Gamma-glutamyl phosphate reductase (418 aa).

Belongs to the gamma-glutamyl phosphate reductase family.

Its subcellular location is the cytoplasm. The catalysed reaction is L-glutamate 5-semialdehyde + phosphate + NADP(+) = L-glutamyl 5-phosphate + NADPH + H(+). It participates in amino-acid biosynthesis; L-proline biosynthesis; L-glutamate 5-semialdehyde from L-glutamate: step 2/2. Catalyzes the NADPH-dependent reduction of L-glutamate 5-phosphate into L-glutamate 5-semialdehyde and phosphate. The product spontaneously undergoes cyclization to form 1-pyrroline-5-carboxylate. The polypeptide is Gamma-glutamyl phosphate reductase (Photobacterium profundum (strain SS9)).